A 435-amino-acid polypeptide reads, in one-letter code: GTPase Obg (435 aa).

Residues alanine 6–leucine 164 form the Obg domain. The OBG-type G domain occupies alanine 165 to arginine 335. GTP-binding positions include glycine 171–serine 178, phenylalanine 196–isoleucine 200, aspartate 217–glycine 220, asparagine 287–aspartate 290, and serine 316–leucine 318. Mg(2+) is bound by residues serine 178 and threonine 198. The OCT domain occupies arginine 357 to glutamate 435.

This sequence belongs to the TRAFAC class OBG-HflX-like GTPase superfamily. OBG GTPase family. As to quaternary structure, monomer. Mg(2+) is required as a cofactor.

Its subcellular location is the cytoplasm. Its function is as follows. An essential GTPase which binds GTP, GDP and possibly (p)ppGpp with moderate affinity, with high nucleotide exchange rates and a fairly low GTP hydrolysis rate. Plays a role in control of the cell cycle, stress response, ribosome biogenesis and in those bacteria that undergo differentiation, in morphogenesis control. This is GTPase Obg from Thermotoga sp. (strain RQ2).